The primary structure comprises 90 residues: uncharacterized protein (90 aa).

Residues 15-34 (HVLAISTFIATAAVASYFTT) form a helical membrane-spanning segment. Positions 34 to 65 (TKPKTKNEGKNSSALSQQKSGESSNSDAMGKD) are disordered. Positions 43 to 60 (KNSSALSQQKSGESSNSD) are enriched in polar residues. N-linked (GlcNAc...) asparagine glycosylation is present at asparagine 44.

The protein resides in the mitochondrion membrane. This is an uncharacterized protein from Saccharomyces cerevisiae (strain ATCC 204508 / S288c) (Baker's yeast).